Consider the following 158-residue polypeptide: Toxin Tse2 (158 aa).

In terms of assembly, forms a heterotetramer with Tsi2 consisting of two Tse2 dimers and two Tsi2 dimers. Formation of the complex inactivates Tse2 enzymatic activity.

It localises to the secreted. In terms of biological role, toxin secreted by the H1 type VI (H1-T6SS) secretion system into the cytoplasm of recipient cells. Acts likely as a NAD-dependent cytotoxin towards both prokaryotic and eukaryotic cells. This Pseudomonas aeruginosa (strain ATCC 15692 / DSM 22644 / CIP 104116 / JCM 14847 / LMG 12228 / 1C / PRS 101 / PAO1) protein is Toxin Tse2.